Here is a 148-residue protein sequence, read N- to C-terminus: Lysozyme C (148 aa).

The first 18 residues, 1–18 (MKAVIILGLVLLSVTVQG), serve as a signal peptide directing secretion. The region spanning 19–148 (KIFERCELAR…VSQYVQGCGV (130 aa)) is the C-type lysozyme domain. Intrachain disulfides connect cysteine 24–cysteine 146, cysteine 48–cysteine 134, cysteine 83–cysteine 99, and cysteine 95–cysteine 113. Residues glutamate 53 and aspartate 71 contribute to the active site.

This sequence belongs to the glycosyl hydrolase 22 family. As to quaternary structure, monomer.

The enzyme catalyses Hydrolysis of (1-&gt;4)-beta-linkages between N-acetylmuramic acid and N-acetyl-D-glucosamine residues in a peptidoglycan and between N-acetyl-D-glucosamine residues in chitodextrins.. Its function is as follows. Lysozymes have primarily a bacteriolytic function; those in tissues and body fluids are associated with the monocyte-macrophage system and enhance the activity of immunoagents. The polypeptide is Lysozyme C (LYZ) (Erythrocebus patas (Red guenon)).